We begin with the raw amino-acid sequence, 280 residues long: MNKDKKLGPILLEKIMEKARDYDFLLKNRYLVSGECGIVEIAEIDEKTEKIDLVLVLGGDGTILCATRYFAPKAIPILGINLGQLGYLSELDPQEIDFGLQKIRAGEYLVEDRTMLEARVRRANQEVAVFYGLNDGVLTKGAFARIINFAVFVDEQYITEYAADGVIVATPTGSTAYSLSAGGAILDPEVKAFIITPICPHTLAARSLVVADDKEIRIVVKTALESSMLTVDGQQGFGIKPGDEIIIKKAPYQAKFIKLKNRSFYQLLREKMREANRYHD.

Asp60 (proton acceptor) is an active-site residue. NAD(+)-binding positions include 60–61, 134–135, Arg145, Asp164, 175–180, and Gln234; these read DG, ND, and TAYSLS.

It belongs to the NAD kinase family. The cofactor is a divalent metal cation.

The protein localises to the cytoplasm. The enzyme catalyses NAD(+) + ATP = ADP + NADP(+) + H(+). Functionally, involved in the regulation of the intracellular balance of NAD and NADP, and is a key enzyme in the biosynthesis of NADP. Catalyzes specifically the phosphorylation on 2'-hydroxyl of the adenosine moiety of NAD to yield NADP. The sequence is that of NAD kinase from Carboxydothermus hydrogenoformans (strain ATCC BAA-161 / DSM 6008 / Z-2901).